Here is a 551-residue protein sequence, read N- to C-terminus: Glucose-6-phosphate isomerase (551 aa).

Residues 161–162 (GS), 212–217 (SKTFTT), Q356, E360, H391, and K516 contribute to the D-glucose 6-phosphate site. The Proton donor role is filled by E360. Active-site residues include H391 and K516.

The protein belongs to the GPI family. In terms of assembly, homodimer.

It is found in the cytoplasm. It localises to the cytosol. The catalysed reaction is alpha-D-glucose 6-phosphate = beta-D-fructose 6-phosphate. The protein operates within carbohydrate degradation; glycolysis; D-glyceraldehyde 3-phosphate and glycerone phosphate from D-glucose: step 2/4. Functionally, in the cytoplasm, catalyzes the conversion of glucose-6-phosphate to fructose-6-phosphate, the second step in glycolysis, and the reverse reaction during gluconeogenesis. This Agaricus bisporus (White button mushroom) protein is Glucose-6-phosphate isomerase (gpi1).